Here is a 320-residue protein sequence, read N- to C-terminus: Integrin-binding sialoprotein (320 aa).

Positions methionine 1–alanine 16 are cleaved as a signal peptide. Phosphoserine occurs at positions 31, 68, 76, 77, and 96. 3 disordered regions span residues proline 60–serine 117, leucine 136–threonine 225, and phenylalanine 238–glycine 264. The span at serine 67–alanine 106 shows a compositional bias: acidic residues. Residue asparagine 108 is glycosylated (N-linked (GlcNAc...) asparagine). Basic and acidic residues predominate over residues lysine 139–glutamate 152. At serine 153 the chain carries Phosphoserine. Over residues serine 153–glutamate 176 the composition is skewed to acidic residues. 2 stretches are compositionally biased toward polar residues: residues glutamine 177 to glutamate 188 and glycine 249 to valine 261. 2 N-linked (GlcNAc...) asparagine glycosylation sites follow: asparagine 180 and asparagine 185. The Integrin-binding motif motif lies at arginine 289–aspartate 291. Tyrosine 316 and tyrosine 317 each carry sulfotyrosine.

As to quaternary structure, monomer. Interacts with integrins; the interaction promotes cell adhesion.

The protein localises to the secreted. In terms of biological role, binds tightly to hydroxyapatite. Appears to form an integral part of the mineralized matrix. Probably important to cell-matrix interaction. Promotes adhesion and migration of various cells via the alpha-V/beta-3 integrin receptor (ITGAV:ITGB3). In Rattus norvegicus (Rat), this protein is Integrin-binding sialoprotein (Ibsp).